The following is a 541-amino-acid chain: Phosphoenolpyruvate carboxykinase (ATP) (541 aa).

Position 243–250 (243–250 (GLSGTGKT)) interacts with ATP.

The protein belongs to the phosphoenolpyruvate carboxykinase (ATP) family.

The enzyme catalyses oxaloacetate + ATP = phosphoenolpyruvate + ADP + CO2. It participates in carbohydrate biosynthesis; gluconeogenesis. The protein is Phosphoenolpyruvate carboxykinase (ATP) (PCK1) of Eremothecium gossypii (strain ATCC 10895 / CBS 109.51 / FGSC 9923 / NRRL Y-1056) (Yeast).